The following is a 485-amino-acid chain: Delta(14)-sterol reductase ERG24A (485 aa).

4 helical membrane passes run 18-38, 77-97, 131-151, and 155-175; these read FFGP…VYVF, GLVS…SLIL, LAVL…WTFM, and FIQI…FVYV. Residue Asn240 is glycosylated (N-linked (GlcNAc...) asparagine). Helical transmembrane passes span 259–279, 285–305, 319–339, and 431–451; these read ILIT…EPAI, ITTD…VPYV, SLGP…FYIF, and AQGW…ILLI.

It belongs to the ERG4/ERG24 family.

It is found in the endoplasmic reticulum membrane. The enzyme catalyses 4,4-dimethyl-5alpha-cholesta-8,24-dien-3beta-ol + NADP(+) = 4,4-dimethyl-5alpha-cholesta-8,14,24-trien-3beta-ol + NADPH + H(+). The protein operates within steroid metabolism; ergosterol biosynthesis. Functionally, delta(14)-sterol reductase; part of the third module of ergosterol biosynthesis pathway that includes the late steps of the pathway. Catalyzes the reduction of the C14=C15 double bond within 4,4,24-trimethyl ergosta-8,14,24(28)-trienolto produce 4,4-dimethylfecosterol. The third module or late pathway involves the ergosterol synthesis itself through consecutive reactions that mainly occur in the endoplasmic reticulum (ER) membrane. Firstly, the squalene synthase ERG9 catalyzes the condensation of 2 farnesyl pyrophosphate moieties to form squalene, which is the precursor of all steroids. Squalene synthase is crucial for balancing the incorporation of farnesyl diphosphate (FPP) into sterol and nonsterol isoprene synthesis. Secondly, squalene is converted into lanosterol by the consecutive action of the squalene epoxidase ERG1 and the lanosterol synthase ERG7. Then, the delta(24)-sterol C-methyltransferase ERG6 methylates lanosterol at C-24 to produce eburicol. Eburicol is the substrate of the sterol 14-alpha demethylase encoded by CYP51A, CYP51B and CYP51C, to yield 4,4,24-trimethyl ergosta-8,14,24(28)-trienol. CYP51B encodes the enzyme primarily responsible for sterol 14-alpha-demethylation, and plays an essential role in ascospore formation. CYP51A encodes an additional sterol 14-alpha-demethylase, induced on ergosterol depletion and responsible for the intrinsic variation in azole sensitivity. The third CYP51 isoform, CYP51C, does not encode a sterol 14-alpha-demethylase, but is required for full virulence on host wheat ears. The C-14 reductase ERG24 then reduces the C14=C15 double bond which leads to 4,4-dimethylfecosterol. A sequence of further demethylations at C-4, involving the C-4 demethylation complex containing the C-4 methylsterol oxidases ERG25, the sterol-4-alpha-carboxylate 3-dehydrogenase ERG26 and the 3-keto-steroid reductase ERG27, leads to the production of fecosterol via 4-methylfecosterol. ERG28 has a role as a scaffold to help anchor ERG25, ERG26 and ERG27 to the endoplasmic reticulum. The C-8 sterol isomerase ERG2 then catalyzes the reaction which results in unsaturation at C-7 in the B ring of sterols and thus converts fecosterol to episterol. The sterol-C5-desaturases ERG3A and ERG3BB then catalyze the introduction of a C-5 double bond in the B ring to produce 5-dehydroepisterol. The C-22 sterol desaturases ERG5A and ERG5B further convert 5-dehydroepisterol into ergosta-5,7,22,24(28)-tetraen-3beta-ol by forming the C-22(23) double bond in the sterol side chain. Finally, ergosta-5,7,22,24(28)-tetraen-3beta-ol is substrate of the C-24(28) sterol reductase ERG4 to produce ergosterol. This is Delta(14)-sterol reductase ERG24A from Gibberella zeae (strain ATCC MYA-4620 / CBS 123657 / FGSC 9075 / NRRL 31084 / PH-1) (Wheat head blight fungus).